Reading from the N-terminus, the 40-residue chain is Ostricacin-3 (40 aa).

Cystine bridges form between cysteine 8-cysteine 36, cysteine 15-cysteine 30, and cysteine 20-cysteine 37.

The protein resides in the secreted. Has antibacterial activity against the Gram-positive bacterium S.aureus 1056 MRSA (MIC=2.78 ug/ml) and the Gram-negative bacterium E.coli O157:H7 (MIC=2.41 ug/ml). Does not have antifungal activity against the yeast C.albicans 3153A. This chain is Ostricacin-3, found in Struthio camelus (Common ostrich).